A 237-amino-acid polypeptide reads, in one-letter code: Ribonuclease PH (237 aa).

Residues Arg86 and 124–126 contribute to the phosphate site; that span reads GTR.

It belongs to the RNase PH family. Homohexameric ring arranged as a trimer of dimers.

The enzyme catalyses tRNA(n+1) + phosphate = tRNA(n) + a ribonucleoside 5'-diphosphate. Phosphorolytic 3'-5' exoribonuclease that plays an important role in tRNA 3'-end maturation. Removes nucleotide residues following the 3'-CCA terminus of tRNAs; can also add nucleotides to the ends of RNA molecules by using nucleoside diphosphates as substrates, but this may not be physiologically important. Probably plays a role in initiation of 16S rRNA degradation (leading to ribosome degradation) during starvation. The sequence is that of Ribonuclease PH from Shewanella denitrificans (strain OS217 / ATCC BAA-1090 / DSM 15013).